A 251-amino-acid chain; its full sequence is Aspartate/glutamate leucyltransferase (251 aa).

It belongs to the R-transferase family. Bpt subfamily.

It localises to the cytoplasm. It catalyses the reaction N-terminal L-glutamyl-[protein] + L-leucyl-tRNA(Leu) = N-terminal L-leucyl-L-glutamyl-[protein] + tRNA(Leu) + H(+). It carries out the reaction N-terminal L-aspartyl-[protein] + L-leucyl-tRNA(Leu) = N-terminal L-leucyl-L-aspartyl-[protein] + tRNA(Leu) + H(+). In terms of biological role, functions in the N-end rule pathway of protein degradation where it conjugates Leu from its aminoacyl-tRNA to the N-termini of proteins containing an N-terminal aspartate or glutamate. This is Aspartate/glutamate leucyltransferase from Xanthomonas oryzae pv. oryzae (strain KACC10331 / KXO85).